A 396-amino-acid polypeptide reads, in one-letter code: 8-amino-7-oxononanoate synthase (396 aa).

Residue Arg-21 coordinates substrate. Gly-108–Tyr-109 contributes to the pyridoxal 5'-phosphate binding site. His-133 is a substrate binding site. Pyridoxal 5'-phosphate contacts are provided by Ser-179, His-207, and Thr-236. An N6-(pyridoxal phosphate)lysine modification is found at Lys-239. A substrate-binding site is contributed by Thr-353.

Belongs to the class-II pyridoxal-phosphate-dependent aminotransferase family. BioF subfamily. In terms of assembly, homodimer. Requires pyridoxal 5'-phosphate as cofactor.

It carries out the reaction 6-carboxyhexanoyl-[ACP] + L-alanine + H(+) = (8S)-8-amino-7-oxononanoate + holo-[ACP] + CO2. Its pathway is cofactor biosynthesis; biotin biosynthesis. Its function is as follows. Catalyzes the decarboxylative condensation of pimeloyl-[acyl-carrier protein] and L-alanine to produce 8-amino-7-oxononanoate (AON), [acyl-carrier protein], and carbon dioxide. In Hahella chejuensis (strain KCTC 2396), this protein is 8-amino-7-oxononanoate synthase.